Consider the following 622-residue polypeptide: C6 finger transcription factor fumR (622 aa).

The segment at residues 94-123 (CDRCHGQKLRCRRENNSDTCVRCARAGVRC) is a DNA-binding region (zn(2)-C6 fungal-type). Disordered regions lie at residues 127 to 175 (PMRL…HSDH), 206 to 248 (ALTA…APNL), 299 to 360 (FDQA…SNSI), and 556 to 585 (PATG…DAGD). Polar residues-rich tracts occupy residues 148–167 (PANG…GPND), 217–226 (VHTSQPSGPQ), and 347–360 (RGNS…SNSI). Over residues 556 to 571 (PATGSASKTAASGPPA) the composition is skewed to low complexity.

The protein resides in the nucleus. Functionally, transcription factor that regulates the expression of the gene clusters that mediate the biosynthesis of pseurotin and fumagillin. This is C6 finger transcription factor fumR from Aspergillus fumigatus (strain ATCC MYA-4609 / CBS 101355 / FGSC A1100 / Af293) (Neosartorya fumigata).